The primary structure comprises 542 residues: Chaperonin GroEL (542 aa).

Residues 29–32 (TLGP), 86–90 (DGTTT), Gly413, and Asp494 contribute to the ATP site.

It belongs to the chaperonin (HSP60) family. In terms of assembly, forms a cylinder of 14 subunits composed of two heptameric rings stacked back-to-back. Interacts with the co-chaperonin GroES.

The protein localises to the cytoplasm. It carries out the reaction ATP + H2O + a folded polypeptide = ADP + phosphate + an unfolded polypeptide.. Its function is as follows. Together with its co-chaperonin GroES, plays an essential role in assisting protein folding. The GroEL-GroES system forms a nano-cage that allows encapsulation of the non-native substrate proteins and provides a physical environment optimized to promote and accelerate protein folding. This is Chaperonin GroEL from Endomicrobium trichonymphae.